The primary structure comprises 357 residues: uncharacterized protein (357 aa).

The 216-residue stretch at His27–Lys242 folds into the Radical SAM core domain. 3 residues coordinate [4Fe-4S] cluster: Cys44, Cys50, and Cys53.

Requires [4Fe-4S] cluster as cofactor.

This is an uncharacterized protein from Methanocaldococcus jannaschii (strain ATCC 43067 / DSM 2661 / JAL-1 / JCM 10045 / NBRC 100440) (Methanococcus jannaschii).